The primary structure comprises 296 residues: Lipoyl synthase (296 aa).

[4Fe-4S] cluster-binding residues include C34, C39, C45, C60, C64, C67, and S276. Residues W46 to K265 form the Radical SAM core domain.

Belongs to the radical SAM superfamily. Lipoyl synthase family. The cofactor is [4Fe-4S] cluster.

It localises to the cytoplasm. It catalyses the reaction [[Fe-S] cluster scaffold protein carrying a second [4Fe-4S](2+) cluster] + N(6)-octanoyl-L-lysyl-[protein] + 2 oxidized [2Fe-2S]-[ferredoxin] + 2 S-adenosyl-L-methionine + 4 H(+) = [[Fe-S] cluster scaffold protein] + N(6)-[(R)-dihydrolipoyl]-L-lysyl-[protein] + 4 Fe(3+) + 2 hydrogen sulfide + 2 5'-deoxyadenosine + 2 L-methionine + 2 reduced [2Fe-2S]-[ferredoxin]. The protein operates within protein modification; protein lipoylation via endogenous pathway; protein N(6)-(lipoyl)lysine from octanoyl-[acyl-carrier-protein]: step 2/2. In terms of biological role, catalyzes the radical-mediated insertion of two sulfur atoms into the C-6 and C-8 positions of the octanoyl moiety bound to the lipoyl domains of lipoate-dependent enzymes, thereby converting the octanoylated domains into lipoylated derivatives. This chain is Lipoyl synthase, found in Pyrobaculum arsenaticum (strain DSM 13514 / JCM 11321 / PZ6).